The sequence spans 240 residues: EF-hand domain-containing protein D2 (240 aa).

The interval 1–51 (MATDELASKLSRRLQMEGEGGEATEQPGLNGAAAAAAAEAPDETAQALGSA) is disordered. Position 2 is an N-acetylalanine (Ala-2). Ser-11 carries the phosphoserine modification. Residues 32-47 (AAAAAAAEAPDETAQA) are compositionally biased toward low complexity. Residues Ser-74 and Ser-76 each carry the phosphoserine modification. Position 83 is a phosphotyrosine (Tyr-83). 2 consecutive EF-hand domains span residues 92–127 (KQIK…LGAP) and 128–163 (QTHL…AAAG). Asp-105, Asp-109, Glu-116, Asp-141, Asp-143, Asp-145, Lys-147, and Glu-152 together coordinate Ca(2+). Position 233 is an N6-acetyllysine (Lys-233).

In terms of assembly, interacts with CASP9; with inactive form. Detected in thymus, kidney, spleen, lung, liver and brain. Highest abundance in brain and lowest in kidney and thymus.

Its subcellular location is the membrane raft. In terms of biological role, may regulate B-cell receptor (BCR)-induced immature and primary B-cell apoptosis. Plays a role as negative regulator of the canonical NF-kappa-B-activating branch. Controls spontaneous apoptosis through the regulation of BCL2L1 abundance. The sequence is that of EF-hand domain-containing protein D2 (Efhd2) from Mus musculus (Mouse).